We begin with the raw amino-acid sequence, 239 residues long: 2',3'-cyclic-nucleotide 3'-phosphodiesterase (239 aa).

Residues His-39 and His-150 each act as proton donor/acceptor in the active site.

This sequence belongs to the 2H phosphoesterase superfamily. CPD1 family.

It localises to the golgi apparatus. It catalyses the reaction ADP-alpha-D-ribose 1'',2''-cyclic phosphate + H2O = ADP-alpha-D-ribose 1''-phosphate + H(+). The enzyme catalyses 2',3'-cyclophospho-AMP + H2O = adenosine 2'-phosphate + H(+). The catalysed reaction is 2',3'-cyclophospho-GMP + H2O = guanosine 2'-phosphate + H(+). It carries out the reaction 2',3'-cyclophospho-UMP + H2O = uridine 2'-phosphate + H(+). It catalyses the reaction 2',3'-cyclophospho-CMP + H2O = cytidine 2'-phosphate + H(+). The enzyme catalyses a nucleoside 2',3'-cyclic phosphate + H2O = a nucleoside 2'-phosphate + H(+). Functionally, involved in the metabolism of ADP-ribose 1',2'-cyclic phosphate which is produced as a consequence of tRNA splicing. The chain is 2',3'-cyclic-nucleotide 3'-phosphodiesterase from Saccharomyces cerevisiae (strain ATCC 204508 / S288c) (Baker's yeast).